The primary structure comprises 63 residues: Small ribosomal subunit protein eS17 (63 aa).

This sequence belongs to the eukaryotic ribosomal protein eS17 family.

The polypeptide is Small ribosomal subunit protein eS17 (Methanococcus vannielii (strain ATCC 35089 / DSM 1224 / JCM 13029 / OCM 148 / SB)).